The primary structure comprises 523 residues: Peptidyl-prolyl cis-trans isomerase 4 (523 aa).

A U-box domain is found at 38-111 (KRLPINHCSL…GKFRCPVTFR (74 aa)). The 156-residue stretch at 278–433 (KNAFVRLVTN…VSVVIMRAEV (156 aa)) folds into the PPIase cyclophilin-type domain.

Belongs to the cyclophilin-type PPIase family. PPIL2 subfamily. In terms of assembly, interacts with mep-1. As to expression, exclusively in the larval body wall striated muscle cells.

It localises to the nucleus. The enzyme catalyses [protein]-peptidylproline (omega=180) = [protein]-peptidylproline (omega=0). It catalyses the reaction S-ubiquitinyl-[E2 ubiquitin-conjugating enzyme]-L-cysteine + [acceptor protein]-L-lysine = [E2 ubiquitin-conjugating enzyme]-L-cysteine + N(6)-ubiquitinyl-[acceptor protein]-L-lysine.. The protein operates within protein modification; protein ubiquitination. Its function is as follows. May catalyze the cis-trans isomerization of proline imidic peptide bonds in oligopeptides thereby assisting the folding of proteins. May also function as a chaperone, playing a role in intracellular transport of proteins. May also have a protein ubiquitin ligase activity acting as an E3 ubiquitin protein ligase or as a ubiquitin-ubiquitin ligase promoting elongation of ubiquitin chains on proteins. Influences the hermaphrodite switch from spermatogenesis to oogenesis. Required for body wall muscle cell development. This chain is Peptidyl-prolyl cis-trans isomerase 4 (cyn-4), found in Caenorhabditis elegans.